The chain runs to 224 residues: Protein-L-isoaspartate O-methyltransferase (224 aa).

Ser63 is a catalytic residue.

Belongs to the methyltransferase superfamily. L-isoaspartyl/D-aspartyl protein methyltransferase family.

The protein resides in the cytoplasm. It carries out the reaction [protein]-L-isoaspartate + S-adenosyl-L-methionine = [protein]-L-isoaspartate alpha-methyl ester + S-adenosyl-L-homocysteine. Its function is as follows. Catalyzes the methyl esterification of L-isoaspartyl residues in peptides and proteins that result from spontaneous decomposition of normal L-aspartyl and L-asparaginyl residues. It plays a role in the repair and/or degradation of damaged proteins. This chain is Protein-L-isoaspartate O-methyltransferase, found in Herpetosiphon aurantiacus (strain ATCC 23779 / DSM 785 / 114-95).